The chain runs to 204 residues: Ribosome maturation factor RimP (204 aa).

Residues asparagine 177 to histidine 204 form a disordered region. Acidic residues predominate over residues serine 181–glutamate 198.

This sequence belongs to the RimP family.

The protein localises to the cytoplasm. Functionally, required for maturation of 30S ribosomal subunits. This is Ribosome maturation factor RimP from Cereibacter sphaeroides (strain ATCC 17025 / ATH 2.4.3) (Rhodobacter sphaeroides).